A 375-amino-acid polypeptide reads, in one-letter code: L-asparaginase 2 (375 aa).

A signal peptide spans 1 to 19 (MKKQRMLVLFTALLFVFTG). The segment at 22–46 (HSPETKESPKEKAQTQKVSSASASE) is disordered. A compositionally biased stretch (basic and acidic residues) spans 24–35 (PETKESPKEKAQ). Residues 51–375 (PNIRILATGG…QKIQAYFNEY (325 aa)) form the Asparaginase/glutaminase domain. Thr-61 (O-isoaspartyl threonine intermediate) is an active-site residue. Residues Ser-108 and 141-142 (TD) each bind substrate.

The protein belongs to the asparaginase 1 family. As to quaternary structure, homotetramer.

It catalyses the reaction L-asparagine + H2O = L-aspartate + NH4(+). Functionally, catalyzes the conversion of L-asparagine to L-aspartate and ammonium. This chain is L-asparaginase 2 (ansZ), found in Bacillus subtilis (strain 168).